A 262-amino-acid polypeptide reads, in one-letter code: Acyl-[acyl-carrier-protein]--UDP-N-acetylglucosamine O-acyltransferase (262 aa).

This sequence belongs to the transferase hexapeptide repeat family. LpxA subfamily. In terms of assembly, homotrimer.

Its subcellular location is the cytoplasm. It catalyses the reaction a (3R)-hydroxyacyl-[ACP] + UDP-N-acetyl-alpha-D-glucosamine = a UDP-3-O-[(3R)-3-hydroxyacyl]-N-acetyl-alpha-D-glucosamine + holo-[ACP]. The protein operates within glycolipid biosynthesis; lipid IV(A) biosynthesis; lipid IV(A) from (3R)-3-hydroxytetradecanoyl-[acyl-carrier-protein] and UDP-N-acetyl-alpha-D-glucosamine: step 1/6. In terms of biological role, involved in the biosynthesis of lipid A, a phosphorylated glycolipid that anchors the lipopolysaccharide to the outer membrane of the cell. The chain is Acyl-[acyl-carrier-protein]--UDP-N-acetylglucosamine O-acyltransferase from Paracidovorax citrulli (strain AAC00-1) (Acidovorax citrulli).